The primary structure comprises 344 residues: Holliday junction branch migration complex subunit RuvB (344 aa).

Over residues 1 to 25 (MTDSDPTLRPDRLPEDVQATDDRAL) the composition is skewed to basic and acidic residues. Residues 1 to 33 (MTDSDPTLRPDRLPEDVQATDDRALRPQSLDDF) are disordered. Residues 1–186 (MTDSDPTLRP…FGIPTRLNFY (186 aa)) are large ATPase domain (RuvB-L). ATP is bound by residues leucine 25, arginine 26, glycine 67, lysine 70, threonine 71, threonine 72, 133–135 (EDF), arginine 176, tyrosine 186, and arginine 223. Mg(2+) is bound at residue threonine 71. The small ATPAse domain (RuvB-S) stretch occupies residues 187 to 257 (TIAELDQIVA…IADSALTRLG (71 aa)). The segment at 260–344 (DLGLDGADRR…PKRPDQGELI (85 aa)) is head domain (RuvB-H). Positions 296, 315, and 320 each coordinate DNA.

Belongs to the RuvB family. In terms of assembly, homohexamer. Forms an RuvA(8)-RuvB(12)-Holliday junction (HJ) complex. HJ DNA is sandwiched between 2 RuvA tetramers; dsDNA enters through RuvA and exits via RuvB. An RuvB hexamer assembles on each DNA strand where it exits the tetramer. Each RuvB hexamer is contacted by two RuvA subunits (via domain III) on 2 adjacent RuvB subunits; this complex drives branch migration. In the full resolvosome a probable DNA-RuvA(4)-RuvB(12)-RuvC(2) complex forms which resolves the HJ.

The protein localises to the cytoplasm. The catalysed reaction is ATP + H2O = ADP + phosphate + H(+). In terms of biological role, the RuvA-RuvB-RuvC complex processes Holliday junction (HJ) DNA during genetic recombination and DNA repair, while the RuvA-RuvB complex plays an important role in the rescue of blocked DNA replication forks via replication fork reversal (RFR). RuvA specifically binds to HJ cruciform DNA, conferring on it an open structure. The RuvB hexamer acts as an ATP-dependent pump, pulling dsDNA into and through the RuvAB complex. RuvB forms 2 homohexamers on either side of HJ DNA bound by 1 or 2 RuvA tetramers; 4 subunits per hexamer contact DNA at a time. Coordinated motions by a converter formed by DNA-disengaged RuvB subunits stimulates ATP hydrolysis and nucleotide exchange. Immobilization of the converter enables RuvB to convert the ATP-contained energy into a lever motion, pulling 2 nucleotides of DNA out of the RuvA tetramer per ATP hydrolyzed, thus driving DNA branch migration. The RuvB motors rotate together with the DNA substrate, which together with the progressing nucleotide cycle form the mechanistic basis for DNA recombination by continuous HJ branch migration. Branch migration allows RuvC to scan DNA until it finds its consensus sequence, where it cleaves and resolves cruciform DNA. The polypeptide is Holliday junction branch migration complex subunit RuvB (Jannaschia sp. (strain CCS1)).